The following is a 350-amino-acid chain: DNA primase small subunit PriS (350 aa).

Active-site residues include Asp-97, Asp-99, and Asp-251.

It belongs to the eukaryotic-type primase small subunit family. Heterodimer of a small subunit (PriS) and a large subunit (PriL). Mg(2+) is required as a cofactor. Mn(2+) serves as cofactor. Requires Zn(2+) as cofactor.

Functionally, catalytic subunit of DNA primase, an RNA polymerase that catalyzes the synthesis of short RNA molecules used as primers for DNA polymerase during DNA replication. The small subunit contains the primase catalytic core and has DNA synthesis activity on its own. Binding to the large subunit stabilizes and modulates the activity, increasing the rate of DNA synthesis while decreasing the length of the DNA fragments, and conferring RNA synthesis capability. The DNA polymerase activity may enable DNA primase to also catalyze primer extension after primer synthesis. May also play a role in DNA repair. The sequence is that of DNA primase small subunit PriS from Methanocaldococcus jannaschii (strain ATCC 43067 / DSM 2661 / JAL-1 / JCM 10045 / NBRC 100440) (Methanococcus jannaschii).